Reading from the N-terminus, the 66-residue chain is Large ribosomal subunit protein uL29 (66 aa).

Belongs to the universal ribosomal protein uL29 family.

The polypeptide is Large ribosomal subunit protein uL29 (Helicobacter pylori (strain HPAG1)).